The chain runs to 545 residues: Thermosome subunit (545 aa).

The protein belongs to the TCP-1 chaperonin family. Forms an oligomeric complex of eight-membered rings.

Functionally, molecular chaperone; binds unfolded polypeptides in vitro, and has a weak ATPase activity. The polypeptide is Thermosome subunit (ths) (Methanopyrus kandleri (strain AV19 / DSM 6324 / JCM 9639 / NBRC 100938)).